We begin with the raw amino-acid sequence, 355 residues long: dTDP-D-glucose 4,6-dehydratase (355 aa).

Threonine 142 provides a ligand contact to substrate. Aspartate 143 (proton donor) is an active-site residue. Catalysis depends on proton acceptor residues glutamate 144 and tyrosine 166.

Belongs to the NAD(P)-dependent epimerase/dehydratase family. dTDP-glucose dehydratase subfamily. It depends on NAD(+) as a cofactor.

It carries out the reaction dTDP-alpha-D-glucose = dTDP-4-dehydro-6-deoxy-alpha-D-glucose + H2O. The polypeptide is dTDP-D-glucose 4,6-dehydratase (Tgds) (Mus musculus (Mouse)).